The primary structure comprises 248 residues: Granulin (248 aa).

The protein belongs to the polyhedrin family.

In terms of biological role, component of the virus occlusion bodies, which are large proteinaceous structures, that protect the virus from the outside environment for extended periods until they are ingested by insect larvae. This chain is Granulin, found in Trichoplusia ni (Cabbage looper).